Consider the following 297-residue polypeptide: Molybdate/tungstate import ATP-binding protein WtpC (297 aa).

In terms of domain architecture, ABC transporter spans 2-226 (LKVNNLSKIW…PKNKKVAEFL (225 aa)). 32 to 39 (GPSGAGKS) contributes to the ATP binding site.

It belongs to the ABC transporter superfamily. Sulfate/tungstate importer (TC 3.A.1.6) family. In terms of assembly, the complex is composed of two ATP-binding proteins (WtpC), two transmembrane proteins (WtpB) and a solute-binding protein (WtpA).

It is found in the cell membrane. The enzyme catalyses tungstate(in) + ATP + H2O = tungstate(out) + ADP + phosphate + H(+). Functionally, part of the ABC transporter complex WtpABC involved in molybdate/tungstate import. Responsible for energy coupling to the transport system. This is Molybdate/tungstate import ATP-binding protein WtpC (wtpC) from Methanocaldococcus jannaschii (strain ATCC 43067 / DSM 2661 / JAL-1 / JCM 10045 / NBRC 100440) (Methanococcus jannaschii).